The sequence spans 274 residues: Large ribosomal subunit protein uL2 (274 aa).

Residues 223–256 (VVMNPVDHPHGGGEGKTGEGRHPVDPWGNLTKGY) form a disordered region. A compositionally biased stretch (basic and acidic residues) spans 229-246 (DHPHGGGEGKTGEGRHPV).

Belongs to the universal ribosomal protein uL2 family. Part of the 50S ribosomal subunit. Forms a bridge to the 30S subunit in the 70S ribosome.

One of the primary rRNA binding proteins. Required for association of the 30S and 50S subunits to form the 70S ribosome, for tRNA binding and peptide bond formation. It has been suggested to have peptidyltransferase activity; this is somewhat controversial. Makes several contacts with the 16S rRNA in the 70S ribosome. This is Large ribosomal subunit protein uL2 from Variovorax paradoxus (strain S110).